We begin with the raw amino-acid sequence, 452 residues long: Cholesterol 7-desaturase nvd 2 (452 aa).

A run of 2 helical transmembrane segments spans residues 6 to 26 (LIRI…MGLC) and 32 to 52 (FPVM…ALVM). One can recognise a Rieske domain in the interval 107 to 212 (WFKVADSTWI…CCEVDGMAYL (106 aa)). [2Fe-2S] cluster contacts are provided by cysteine 148, histidine 150, cysteine 169, and histidine 172.

The protein belongs to the cholesterol 7-desaturase family. [2Fe-2S] cluster is required as a cofactor.

The protein localises to the membrane. It catalyses the reaction cholesterol + NADPH + O2 + H(+) = 7-dehydrocholesterol + NADP(+) + 2 H2O. It carries out the reaction cholesterol + NADH + O2 + H(+) = 7-dehydrocholesterol + NAD(+) + 2 H2O. It functions in the pathway steroid hormone biosynthesis; dafachronic acid biosynthesis. In terms of biological role, catalyzes the production of 7-dehydrocholesterol (7-DHC or cholesta-5,7-dien-3beta-ol) by inserting a double bond (desaturating) at the C7-C8 single bond of cholesterol. Essential regulator of steroid biosynthesis as this reaction is the first step in the synthesis of the steroid hormone Delta(7)-dafachronic acid. This chain is Cholesterol 7-desaturase nvd 2, found in Ciona intestinalis (Transparent sea squirt).